The chain runs to 118 residues: Histone H4 (118 aa).

Positions 1 to 39 are disordered; the sequence is MATDTGSGRGKGGKGVTLGKGSKGAKASKGGKRIRTKTQ. Residues 7 to 22 are compositionally biased toward gly residues; it reads SGRGKGGKGVTLGKGS.

The protein belongs to the histone H4 family. The nucleosome is a histone octamer containing two molecules each of H2A, H2B, H3 and H4 assembled in one H3-H4 heterotetramer and two H2A-H2B heterodimers. The octamer wraps approximately 147 bp of DNA.

It is found in the nucleus. It localises to the chromosome. Functionally, core component of nucleosome. Nucleosomes wrap and compact DNA into chromatin, limiting DNA accessibility to the cellular machineries which require DNA as a template. Histones thereby play a central role in transcription regulation, DNA repair, DNA replication and chromosomal stability. DNA accessibility is regulated via a complex set of post-translational modifications of histones, also called histone code, and nucleosome remodeling. This chain is Histone H4, found in Entamoeba histolytica (strain ATCC 30459 / HM-1:IMSS / ABRM).